A 1862-amino-acid chain; its full sequence is Chitin synthase V (1862 aa).

The disordered stretch occupies residues 1 to 26 (MAMSLPQLGGAGGPHTQPSLPSLPAH). The region spanning 1-778 (MAMSLPQLGG…CWMEIAQLGE (778 aa)) is the Myosin motor domain. Asn63 is a glycosylation site (N-linked (GlcNAc...) asparagine). 104–111 (GESGAGKS) provides a ligand contact to ATP. 5 N-linked (GlcNAc...) asparagine glycosylation sites follow: Asn123, Asn429, Asn483, Asn522, and Asn560. The tract at residues 592 to 643 (TVSSKPMRAPSVMSRKTHRTGRPSTAYKRQQQEAMEELDQQSQAGESKKNAK) is disordered. Residues 658–682 (LDNVQKAVTDPGTNSYFVFCLKPND) form an actin-binding region. The next 2 membrane-spanning stretches (helical) occupy residues 884–904 (WVAL…RLIG) and 923–943 (MLIW…PMLI). The Cytochrome b5 heme-binding domain maps to 947 to 1009 (QYVYSSNELS…YAGKDISALF (63 aa)). N-linked (GlcNAc...) asparagine glycosylation is found at Asn1036, Asn1063, and Asn1192. The chain crosses the membrane as a helical span at residues 1202–1222 (FILAISVMLASILVFKFLAAL). N-linked (GlcNAc...) asparagine glycosylation is found at Asn1459 and Asn1565. 3 helical membrane passes run 1590–1610 (FVVF…MYIV), 1623–1643 (VPIT…VIFI), and 1650–1670 (MVGW…GLPL). N-linked (GlcNAc...) asparagine glycosylation occurs at Asn1771. Positions 1804-1859 (MPSDDALLAEIRDILKTADLMTVTKKGIKQELERRFNVPLDAKRAYINSATEALLS) constitute a DEK-C domain.

This sequence in the N-terminal section; belongs to the TRAFAC class myosin-kinesin ATPase superfamily. Myosin family. It in the C-terminal section; belongs to the chitin synthase family. Class V subfamily.

It localises to the cell membrane. It catalyses the reaction [(1-&gt;4)-N-acetyl-beta-D-glucosaminyl](n) + UDP-N-acetyl-alpha-D-glucosamine = [(1-&gt;4)-N-acetyl-beta-D-glucosaminyl](n+1) + UDP + H(+). In terms of biological role, polymerizes chitin, a structural polymer of the cell wall and septum, by transferring the sugar moiety of UDP-GlcNAc to the non-reducing end of the growing chitin polymer. ChsV and chsVb do perform additive, but not redundant, functions in septum formation. Involved in cell wall integrity and resistance to antimicrobial plant defense compounds such as the tomato phytoanticipin alpha-tomatine or H(2)O(2), and plays a crucial role in vascular colonization and pathogenicity. Also plays an important role in nuclear sorting or distribution. This is Chitin synthase V from Fusarium oxysporum f. sp. lycopersici (strain 4287 / CBS 123668 / FGSC 9935 / NRRL 34936) (Fusarium vascular wilt of tomato).